We begin with the raw amino-acid sequence, 1048 residues long: Anguibactin system regulator (1048 aa).

The Carrier domain occupies 965 to 1039; it reads PIITASEDRV…AFAIIMDRCR (75 aa).

This sequence belongs to the ATP-dependent AMP-binding enzyme family.

The protein operates within siderophore biosynthesis; anguibactin biosynthesis. Functionally, bifunctional protein that plays an essential role in virulence. Plays a role in both the production of the siderophore anguibactin and the regulation of iron transport genes. This is Anguibactin system regulator (angR) from Vibrio anguillarum (Listonella anguillarum).